A 139-amino-acid polypeptide reads, in one-letter code: Translation initiation factor 2 subunit beta (139 aa).

This sequence belongs to the eIF-2-beta/eIF-5 family. Heterotrimer composed of an alpha, a beta and a gamma chain.

Functionally, eIF-2 functions in the early steps of protein synthesis by forming a ternary complex with GTP and initiator tRNA. The sequence is that of Translation initiation factor 2 subunit beta from Nanoarchaeum equitans (strain Kin4-M).